The primary structure comprises 196 residues: Phosphoheptose isomerase (196 aa).

One can recognise an SIS domain in the interval 34-192 (MVQCLLGGNK…CEIIDTTLFP (159 aa)). Residue 49–51 (NGG) coordinates substrate. The Zn(2+) site is built by His-58 and Gln-62. Substrate-binding positions include Gln-62, 91 to 92 (ND), 117 to 119 (STS), Ser-122, and Gln-172. 2 residues coordinate Zn(2+): Gln-172 and His-180.

The protein belongs to the SIS family. GmhA subfamily. As to quaternary structure, homotetramer. It depends on Zn(2+) as a cofactor.

The protein localises to the cytoplasm. It carries out the reaction 2 D-sedoheptulose 7-phosphate = D-glycero-alpha-D-manno-heptose 7-phosphate + D-glycero-beta-D-manno-heptose 7-phosphate. It participates in carbohydrate biosynthesis; D-glycero-D-manno-heptose 7-phosphate biosynthesis; D-glycero-alpha-D-manno-heptose 7-phosphate and D-glycero-beta-D-manno-heptose 7-phosphate from sedoheptulose 7-phosphate: step 1/1. Functionally, catalyzes the isomerization of sedoheptulose 7-phosphate in D-glycero-D-manno-heptose 7-phosphate. The chain is Phosphoheptose isomerase from Colwellia psychrerythraea (strain 34H / ATCC BAA-681) (Vibrio psychroerythus).